A 485-amino-acid chain; its full sequence is Glycogen synthase (485 aa).

Lys21 lines the ADP-alpha-D-glucose pocket.

Belongs to the glycosyltransferase 1 family. Bacterial/plant glycogen synthase subfamily.

The catalysed reaction is [(1-&gt;4)-alpha-D-glucosyl](n) + ADP-alpha-D-glucose = [(1-&gt;4)-alpha-D-glucosyl](n+1) + ADP + H(+). It participates in glycan biosynthesis; glycogen biosynthesis. Its function is as follows. Synthesizes alpha-1,4-glucan chains using ADP-glucose. The sequence is that of Glycogen synthase from Pseudomonas syringae pv. syringae (strain B728a).